The chain runs to 1337 residues: Zinc finger protein 335 (1337 aa).

Disordered regions lie at residues 1-108 and 198-226; these read MEEN…LVHS and GPTSTSACLEPPEEPQGDPSSVAQQPPAP. Composition is skewed to low complexity over residues 31–45 and 54–63; these read TSEAVSADSSDAATV and SGVGQSSDGG. Residues 248-271 form a C2H2-type 1 zinc finger; that stretch reads FKCKMCQYRSSTKATLLRHMRERH. The interval 278 to 444 is disordered; sequence AAAAATGKRG…PPRRRGRPSR (167 aa). Residues 302 to 332 show a composition bias toward acidic residues; it reads DRPEEEEEDDDIVDAGAIDDLEEDSDYNPAE. Over residues 351–362 the composition is skewed to basic residues; sequence RPRRRPGRPRKL. A compositionally biased stretch (basic and acidic residues) spans 363 to 372; it reads PRLETSDLHD. A compositionally biased stretch (polar residues) spans 378-388; the sequence is LVSSQSTQSPP. 8 C2H2-type zinc fingers span residues 466–488, 496–518, 524–546, 563–585, 591–613, 622–644, 650–673, and 679–702; these read YLCRICGSRFLSHEDLRFHVNSH, FRCLQCSYRSRRWSSLKEHMFNH, YKCDECSYTSVYRKDVIRHAAVH, FPCPVCGRVYPMQKRLTQHMKTH, HMCDKCGKSFKKRYTFKMHLLTH, FKCEFCEFVCEDKKALLNHQLSH, FKCSFCPYRTFREDFLLSHVAVKH, and FACEYCHFSTRHKKNLRLHVRCRH. Disordered stretches follow at residues 733-767 and 963-999; these read LKQQHSTAPGPPLSSPGPEAPQEPAPFQSPETPPL and QCGGPPRDGSEVLSPTKTHHMGGSQGSSTPPPAASHT. The segment covering 741 to 756 has biased composition (pro residues); sequence PGPPLSSPGPEAPQEP. Ser976 and Ser1007 each carry phosphoserine. 4 C2H2-type zinc fingers span residues 1019 to 1041, 1047 to 1069, 1075 to 1097, and 1103 to 1126; these read FSCKVCSEAFPSRAEMESHKRAH, FKCPDCPFSARQWPEVRAHMAQH, HQCNQCSFASKNKKDLRRHMLTH, and FSCHVCGQRFNRNGHLKFHIQRLH. A Glycyl lysine isopeptide (Lys-Gly) (interchain with G-Cter in SUMO2) cross-link involves residue Lys1022. Position 1149 is a phosphoserine (Ser1149).

Belongs to the krueppel C2H2-type zinc-finger protein family. Interacts with NCOA6; may enhance ligand-dependent transcriptional activation by nuclear hormone receptors. Interacts with CNOT6. Interacts with CNOT9; the interaction is direct. Component of a nuclear receptor-mediated transcription complex composed of at least ZNF335, CCAR2 and EMSY; the complex stimulates the transcription of nuclear receptor target genes such as SOX9 and HOXA1. Within the complex interacts with EMSY and interacts (via C-terminus) with CCAR2. Interacts with members of histone H3'Lys4'(H3K4) methyltransferase complexes ASH2L, CXXC1, KMT2A/MLL1, RBBP5, SETD1A and WDR5. Component of a histone methylation complex composed of at least ZNF335, RBBP5, ASH2L and WDR5; the complex may have histone H3-specific methyltransferase activity, however does not have specificity for 'Lys-4' of histone H3. Interacts with RBBP5 and WDR5. Interacts with ASHL2. Components of this complex may associate with components of the ZNF335-CCAR2-EMSY nuclear receptor-mediated transcription complex to form a complex at least composed of ZNF335, HCFC1, CCAR2, EMSY, MKI67, RBBP5, ASH2L and WDR5. Within this complex also interacts with HCFC1 and MKI67. In terms of tissue distribution, expressed at low levels in cerebral cortex, hippocampus and cerebellum (at protein level).

The protein resides in the nucleus. Component or associated component of some histone methyltransferase complexes may regulate transcription through recruitment of those complexes on gene promoters. Enhances ligand-dependent transcriptional activation by nuclear hormone receptors. Plays an important role in neural progenitor cell proliferation and self-renewal through the regulation of specific genes involved brain development, including REST. Also controls the expression of genes involved in somatic development and regulates, for instance, lymphoblast proliferation. This Mus musculus (Mouse) protein is Zinc finger protein 335 (Znf335).